A 762-amino-acid chain; its full sequence is Phosphoribosylformylglycinamidine synthase subunit PurL (762 aa).

The active site involves H58. ATP is bound by residues Y61 and R105. E107 lines the Mg(2+) pocket. Residues 108–111 and R130 contribute to the substrate site; that span reads SHNH. Catalysis depends on H109, which acts as the Proton acceptor. D131 is a Mg(2+) binding site. Q255 serves as a coordination point for substrate. Mg(2+) is bound at residue D283. Position 327-329 (327-329) interacts with substrate; that stretch reads ESQ. Residues N513 and G550 each contribute to the ATP site. N551 serves as a coordination point for Mg(2+). Residue S553 coordinates substrate.

Belongs to the FGAMS family. In terms of assembly, monomer. Part of the FGAM synthase complex composed of 1 PurL, 1 PurQ and 2 PurS subunits.

It localises to the cytoplasm. The enzyme catalyses N(2)-formyl-N(1)-(5-phospho-beta-D-ribosyl)glycinamide + L-glutamine + ATP + H2O = 2-formamido-N(1)-(5-O-phospho-beta-D-ribosyl)acetamidine + L-glutamate + ADP + phosphate + H(+). It participates in purine metabolism; IMP biosynthesis via de novo pathway; 5-amino-1-(5-phospho-D-ribosyl)imidazole from N(2)-formyl-N(1)-(5-phospho-D-ribosyl)glycinamide: step 1/2. Part of the phosphoribosylformylglycinamidine synthase complex involved in the purines biosynthetic pathway. Catalyzes the ATP-dependent conversion of formylglycinamide ribonucleotide (FGAR) and glutamine to yield formylglycinamidine ribonucleotide (FGAM) and glutamate. The FGAM synthase complex is composed of three subunits. PurQ produces an ammonia molecule by converting glutamine to glutamate. PurL transfers the ammonia molecule to FGAR to form FGAM in an ATP-dependent manner. PurS interacts with PurQ and PurL and is thought to assist in the transfer of the ammonia molecule from PurQ to PurL. The polypeptide is Phosphoribosylformylglycinamidine synthase subunit PurL (Corynebacterium glutamicum (strain R)).